The chain runs to 142 residues: Galactose-6-phosphate isomerase subunit LacA (142 aa).

Belongs to the LacAB/RpiB family. Heteromultimeric protein consisting of LacA and LacB.

The catalysed reaction is aldehydo-D-galactose 6-phosphate = keto-D-tagatose 6-phosphate. Its pathway is carbohydrate metabolism; D-galactose 6-phosphate degradation; D-tagatose 6-phosphate from D-galactose 6-phosphate: step 1/1. In Staphylococcus aureus (strain JH9), this protein is Galactose-6-phosphate isomerase subunit LacA.